We begin with the raw amino-acid sequence, 406 residues long: S-adenosylmethionine synthase (406 aa).

His-5 is a binding site for ATP. Position 7 (Asp-7) interacts with Mg(2+). Glu-33 serves as a coordination point for K(+). Glu-46 and Gln-89 together coordinate L-methionine. A flexible loop region spans residues Gln-89–Thr-99. ATP-binding positions include Asp-164–Lys-166, Lys-240–Phe-241, Asp-249, Arg-255–Lys-256, Ala-272, and Lys-276. Asp-249 is a binding site for L-methionine. Lys-280 lines the L-methionine pocket.

Belongs to the AdoMet synthase family. As to quaternary structure, homotetramer; dimer of dimers. It depends on Mg(2+) as a cofactor. The cofactor is K(+).

Its subcellular location is the cytoplasm. The catalysed reaction is L-methionine + ATP + H2O = S-adenosyl-L-methionine + phosphate + diphosphate. It functions in the pathway amino-acid biosynthesis; S-adenosyl-L-methionine biosynthesis; S-adenosyl-L-methionine from L-methionine: step 1/1. Its function is as follows. Catalyzes the formation of S-adenosylmethionine (AdoMet) from methionine and ATP. The overall synthetic reaction is composed of two sequential steps, AdoMet formation and the subsequent tripolyphosphate hydrolysis which occurs prior to release of AdoMet from the enzyme. This chain is S-adenosylmethionine synthase, found in Synechococcus sp. (strain ATCC 27144 / PCC 6301 / SAUG 1402/1) (Anacystis nidulans).